A 188-amino-acid polypeptide reads, in one-letter code: Photosystem I assembly protein Ycf4 (188 aa).

The next 2 helical transmembrane spans lie at 22–42 (LGWA…GLSS) and 68–88 (LVMC…WCAI).

The protein belongs to the Ycf4 family.

The protein localises to the plastid. The protein resides in the chloroplast thylakoid membrane. Seems to be required for the assembly of the photosystem I complex. The sequence is that of Photosystem I assembly protein Ycf4 from Zygnema circumcarinatum (Green alga).